The sequence spans 300 residues: Protein XRI1 (300 aa).

Interacts (via C-terminal domain) with MIP1.

The protein localises to the nucleus. Its function is as follows. Required for mitotic division of the generative cell nucleus and the development of mature tricellular pollen grains, and for male and female meiosis. In Arabidopsis thaliana (Mouse-ear cress), this protein is Protein XRI1 (XRI1).